The primary structure comprises 153 residues: Small ribosomal subunit protein bS16 (153 aa).

The disordered stretch occupies residues 130 to 153 (EAEAAAAAEEAPAEEAAEEAPAEA). Residues 140 to 153 (APAEEAAEEAPAEA) are compositionally biased toward acidic residues.

This sequence belongs to the bacterial ribosomal protein bS16 family.

The protein is Small ribosomal subunit protein bS16 of Bifidobacterium longum subsp. infantis (strain ATCC 15697 / DSM 20088 / JCM 1222 / NCTC 11817 / S12).